The chain runs to 296 residues: MMFKQYLQVTKPGIIFGNLISVIGGFLLASKGSIDYPLFIYTLVGVSLVVASGCVFNNYIDRDIDRKMERTKNRVLVKGLISPAVSLVYATLLGFAGFMLLWFGANPLACWLGVMGFVVYVGVYSLYMKRHSVYGTLIGSLSGAAPPVIGYCAVTGEFDSGAAILLAIFSLWQMPHSYAIAIFRFKDYQAANIPVLPVVKGISVAKNHITLYIIAFAVATLMLSLGGYAGYKYLVVAAAVSVWWLGMALRGYKVADDRIWARKLFGFSIIAITALSVMMSVDFMVPDSHTLLAAVW.

Over 1–9 the chain is Cytoplasmic; that stretch reads MMFKQYLQV. The chain crosses the membrane as a helical span at residues 10–28; it reads TKPGIIFGNLISVIGGFLL. Topologically, residues 29–37 are periplasmic; the sequence is ASKGSIDYP. Residues 38–56 form a helical membrane-spanning segment; sequence LFIYTLVGVSLVVASGCVF. The Cytoplasmic portion of the chain corresponds to 57-78; it reads NNYIDRDIDRKMERTKNRVLVK. The chain crosses the membrane as a helical span at residues 79-97; sequence GLISPAVSLVYATLLGFAG. Over 98 to 107 the chain is Periplasmic; sequence FMLLWFGANP. A helical membrane pass occupies residues 108 to 126; it reads LACWLGVMGFVVYVGVYSL. Residues 127–197 are Cytoplasmic-facing; sequence YMKRHSVYGT…YQAANIPVLP (71 aa). Residues 198–216 traverse the membrane as a helical segment; the sequence is VVKGISVAKNHITLYIIAF. The Periplasmic portion of the chain corresponds to 217 to 228; it reads AVATLMLSLGGY. A helical transmembrane segment spans residues 229-247; it reads AGYKYLVVAAAVSVWWLGM. At 248 to 268 the chain is on the cytoplasmic side; sequence ALRGYKVADDRIWARKLFGFS. A helical membrane pass occupies residues 269–287; that stretch reads IIAITALSVMMSVDFMVPD. At 288–296 the chain is on the periplasmic side; the sequence is SHTLLAAVW.

It belongs to the UbiA prenyltransferase family. Protoheme IX farnesyltransferase subfamily.

It is found in the cell inner membrane. The enzyme catalyses heme b + (2E,6E)-farnesyl diphosphate + H2O = Fe(II)-heme o + diphosphate. Its pathway is porphyrin-containing compound metabolism; heme O biosynthesis; heme O from protoheme: step 1/1. Its function is as follows. Converts heme B (protoheme IX) to heme O by substitution of the vinyl group on carbon 2 of heme B porphyrin ring with a hydroxyethyl farnesyl side group. This is Protoheme IX farnesyltransferase from Shigella sonnei (strain Ss046).